The primary structure comprises 434 residues: Nicotinate phosphoribosyltransferase (434 aa).

Phosphohistidine; by autocatalysis is present on His242.

Belongs to the NAPRTase family. Transiently phosphorylated on a His residue during the reaction cycle. Phosphorylation strongly increases the affinity for substrates and increases the rate of nicotinate D-ribonucleotide production. Dephosphorylation regenerates the low-affinity form of the enzyme, leading to product release.

It catalyses the reaction nicotinate + 5-phospho-alpha-D-ribose 1-diphosphate + ATP + H2O = nicotinate beta-D-ribonucleotide + ADP + phosphate + diphosphate. It participates in cofactor biosynthesis; NAD(+) biosynthesis; nicotinate D-ribonucleotide from nicotinate: step 1/1. In terms of biological role, catalyzes the synthesis of beta-nicotinate D-ribonucleotide from nicotinate and 5-phospho-D-ribose 1-phosphate at the expense of ATP. This chain is Nicotinate phosphoribosyltransferase, found in Sinorhizobium fredii (strain NBRC 101917 / NGR234).